We begin with the raw amino-acid sequence, 511 residues long: Probable cytochrome P450 4d21 (511 aa).

Cys456 is a binding site for heme.

The protein belongs to the cytochrome P450 family. The cofactor is heme.

It localises to the endoplasmic reticulum membrane. The protein localises to the microsome membrane. Its function is as follows. May be involved in the metabolism of insect hormones and in the breakdown of synthetic insecticides. This chain is Probable cytochrome P450 4d21 (Cyp4d21), found in Drosophila melanogaster (Fruit fly).